The following is a 300-amino-acid chain: uncharacterized protein (300 aa).

It belongs to the histone deacetylase family.

Putative deacetylase. This is an uncharacterized protein from Picosynechococcus sp. (strain ATCC 27264 / PCC 7002 / PR-6) (Agmenellum quadruplicatum).